Reading from the N-terminus, the 142-residue chain is Hemoglobin subunit alpha (142 aa).

Residues 2–142 form the Globin domain; sequence VLSPTDKSNV…VSTVLTSKYR (141 aa). Residue S4 is modified to Phosphoserine. Residues K8 and K12 each carry the N6-succinyllysine modification. An N6-acetyllysine; alternate modification is found at K17. K17 carries the post-translational modification N6-succinyllysine; alternate. Y25 bears the Phosphotyrosine mark. Position 41 is an N6-succinyllysine (K41). O2 is bound at residue H59. H88 contacts heme b. S103 carries the post-translational modification Phosphoserine. At T109 the chain carries Phosphothreonine. S125 and S132 each carry phosphoserine. Residues T135 and T138 each carry the phosphothreonine modification. S139 is subject to Phosphoserine.

It belongs to the globin family. Heterotetramer of two alpha chains and two beta chains. Red blood cells.

Functionally, involved in oxygen transport from the lung to the various peripheral tissues. In terms of biological role, hemopressin acts as an antagonist peptide of the cannabinoid receptor CNR1. Hemopressin-binding efficiently blocks cannabinoid receptor CNR1 and subsequent signaling. The polypeptide is Hemoglobin subunit alpha (HBA) (Balaenoptera acutorostrata (Common minke whale)).